The following is a 1493-amino-acid chain: ABC transporter C family member 7 (1493 aa).

A run of 10 helical transmembrane segments spans residues 21–41, 70–90, 102–122, 140–160, 165–185, 309–329, 343–360, 423–443, 448–468, and 535–555; these read FPMFSIFFNLLLLLVMFGSCV, VVICCETLSALNSVLLLLSCF, LMILLDLLFTALSWGAISFYI, VWWVLYFMFSCYRLLVDIALY, LVSVHLLLSDVLAVSVGLFLC, ILLSTLFAFVYTVSCYVAPYL, YSNQGVVLVTTFFVAKLV, WYMHDPWILVLQISLALLILY, LGSIAAFAATFLVMLGNIPLA, and SVLWAAPSFVSATAFGACMLL. The ABC transmembrane type-1 1 domain maps to 309-590; it reads ILLSTLFAFV…LPDTISMIVQ (282 aa). Residues 624–847 enclose the ABC transporter 1 domain; that stretch reads VEVSNGAFSW…GTDFMELVGA (224 aa). 659–666 is a binding site for ATP; sequence GTVGSGKS. Positions 863–898 are disordered; sequence ASAQSTTSKESKVSNDEEKQEEDLPSPKGQLVQEEE. A Phosphoserine modification is found at serine 888. 6 consecutive transmembrane segments (helical) span residues 915–935, 959–979, 1038–1055, 1059–1081, 1153–1173, and 1177–1197; these read LAYGGALVPIILVVQILFQVL, GSTLILVYVFLATASSFCILV, FSNLAIAAVNILGIIGVM, AWQVLIVFIPVIAACTWYRQYYI, LSTVAFALSLVILVSVPEGVI, and FAGLAVTYALNLNSLQATLIW. An ABC transmembrane type-1 2 domain is found at 922–1204; it reads VPIILVVQIL…LIWTLCDLEN (283 aa). The ABC transporter 2 domain maps to 1241 to 1475; the sequence is ITICNLQVRY…KSSSFSKLVA (235 aa). 1275–1282 contributes to the ATP binding site; the sequence is GRTGCGKS.

Belongs to the ABC transporter superfamily. ABCC family. Conjugate transporter (TC 3.A.1.208) subfamily. As to expression, ubiquitous.

Its subcellular location is the membrane. The enzyme catalyses ATP + H2O + xenobioticSide 1 = ADP + phosphate + xenobioticSide 2.. Pump for glutathione S-conjugates. In Arabidopsis thaliana (Mouse-ear cress), this protein is ABC transporter C family member 7 (ABCC7).